Here is a 490-residue protein sequence, read N- to C-terminus: ATP synthase subunit beta, chloroplastic (490 aa).

G170–T177 contributes to the ATP binding site.

This sequence belongs to the ATPase alpha/beta chains family. As to quaternary structure, F-type ATPases have 2 components, CF(1) - the catalytic core - and CF(0) - the membrane proton channel. CF(1) has five subunits: alpha(3), beta(3), gamma(1), delta(1), epsilon(1). CF(0) has four main subunits: a(1), b(1), b'(1) and c(9-12).

Its subcellular location is the plastid. It localises to the chloroplast thylakoid membrane. The enzyme catalyses ATP + H2O + 4 H(+)(in) = ADP + phosphate + 5 H(+)(out). Produces ATP from ADP in the presence of a proton gradient across the membrane. The catalytic sites are hosted primarily by the beta subunits. The chain is ATP synthase subunit beta, chloroplastic from Ipomoea aquatica (Water spinach).